Consider the following 757-residue polypeptide: 5-methyltetrahydropteroyltriglutamate--homocysteine methyltransferase (757 aa).

Residues 16–19 (RELK) and lysine 112 contribute to the 5-methyltetrahydropteroyltri-L-glutamate site. L-homocysteine-binding positions include 433–435 (IGS) and glutamate 486. L-methionine is bound by residues 433–435 (IGS) and glutamate 486. 5-methyltetrahydropteroyltri-L-glutamate contacts are provided by residues 517 to 518 (RC) and tryptophan 563. An L-homocysteine-binding site is contributed by aspartate 601. Aspartate 601 lines the L-methionine pocket. Glutamate 607 contacts 5-methyltetrahydropteroyltri-L-glutamate. Residues histidine 643, cysteine 645, and glutamate 667 each coordinate Zn(2+). Histidine 696 functions as the Proton donor in the catalytic mechanism. Cysteine 728 is a Zn(2+) binding site.

This sequence belongs to the vitamin-B12 independent methionine synthase family. Zn(2+) is required as a cofactor.

It catalyses the reaction 5-methyltetrahydropteroyltri-L-glutamate + L-homocysteine = tetrahydropteroyltri-L-glutamate + L-methionine. The protein operates within amino-acid biosynthesis; L-methionine biosynthesis via de novo pathway; L-methionine from L-homocysteine (MetE route): step 1/1. In terms of biological role, catalyzes the transfer of a methyl group from 5-methyltetrahydrofolate to homocysteine resulting in methionine formation. The protein is 5-methyltetrahydropteroyltriglutamate--homocysteine methyltransferase of Pasteurella multocida (strain Pm70).